A 184-amino-acid polypeptide reads, in one-letter code: Dual specificity protein phosphatase 22 (184 aa).

A lipid anchor (N-myristoyl glycine) is attached at glycine 2. A Tyrosine-protein phosphatase domain is found at 4 to 144 (GMSQILPGLY…LQEFEKHEVH (141 aa)). Cysteine 88 acts as the Phosphocysteine intermediate in catalysis. A protein is bound by residues leucine 89, alanine 90, valine 92, serine 93, and arginine 94.

Belongs to the protein-tyrosine phosphatase family. Non-receptor class dual specificity subfamily. As to quaternary structure, monomer. Interacts with LCK; the interaction is direct. Interacts with UBR2; the interaction is direct. Myristoylation regulates subcellular location, and is necessary for activation of JNK.

It localises to the cytoplasm. The enzyme catalyses O-phospho-L-tyrosyl-[protein] + H2O = L-tyrosyl-[protein] + phosphate. It catalyses the reaction O-phospho-L-seryl-[protein] + H2O = L-seryl-[protein] + phosphate. It carries out the reaction O-phospho-L-threonyl-[protein] + H2O = L-threonyl-[protein] + phosphate. Dual specificity phosphatase; can dephosphorylate both phosphotyrosine and phosphoserine or phosphothreonine residues. Activates the JNK signaling pathway. Inhibits T-cell receptor signaling and T-cell mediated immune responses, acting, at least in part, by inducing degradation of E3 ubiquitin ligase UBR2. Dephosphorylates and thereby induces 'Lys-48'-linked ubiquitination of UBR2, leading to proteasomal degradation of UBR2. Dephosphorylates and thereby inactivates tyrosine kinase LCK. Inhibits UBR2-mediated 'Lys-63'-linked ubiquitination of LCK. May play a role in B-cell receptor (BCR) signaling and B-cell function. The chain is Dual specificity protein phosphatase 22 (Dusp22) from Mus musculus (Mouse).